Reading from the N-terminus, the 269-residue chain is Putative ankyrin repeat protein L23 (269 aa).

ANK repeat units lie at residues 118–147, 148–177, 179–207, 208–237, and 238–267; these read EDDY…DIKS, DGDY…DIRA, NDYA…NIRE, QNDY…DIRA, and DNDC…DIRA.

The protein is Putative ankyrin repeat protein L23 of Acanthamoeba polyphaga (Amoeba).